We begin with the raw amino-acid sequence, 228 residues long: Cytochrome c oxidase subunit 2 (228 aa).

Residues 1 to 26 are Mitochondrial intermembrane-facing; it reads MSTWANLGLQDSASPLMEQLIFFHDH. Residues 27 to 48 form a helical membrane-spanning segment; that stretch reads ALLILVMITVLVGYLMFMLFFN. The Mitochondrial matrix portion of the chain corresponds to 49 to 62; the sequence is NYVNRFLLHGQLIE. A helical transmembrane segment spans residues 63–82; the sequence is MIWTILPAIILLFIALPSLR. The Mitochondrial intermembrane portion of the chain corresponds to 83 to 228; sequence LLYLLDEINE…FIKWISSNNS (146 aa). Cu cation-binding residues include His161, Cys196, Glu198, Cys200, His204, and Met207. A Mg(2+)-binding site is contributed by Glu198.

The protein belongs to the cytochrome c oxidase subunit 2 family. In terms of assembly, component of the cytochrome c oxidase (complex IV, CIV), a multisubunit enzyme composed of a catalytic core of 3 subunits and several supernumerary subunits. The complex exists as a monomer or a dimer and forms supercomplexes (SCs) in the inner mitochondrial membrane with ubiquinol-cytochrome c oxidoreductase (cytochrome b-c1 complex, complex III, CIII). Cu cation is required as a cofactor.

The protein localises to the mitochondrion inner membrane. It carries out the reaction 4 Fe(II)-[cytochrome c] + O2 + 8 H(+)(in) = 4 Fe(III)-[cytochrome c] + 2 H2O + 4 H(+)(out). Functionally, component of the cytochrome c oxidase, the last enzyme in the mitochondrial electron transport chain which drives oxidative phosphorylation. The respiratory chain contains 3 multisubunit complexes succinate dehydrogenase (complex II, CII), ubiquinol-cytochrome c oxidoreductase (cytochrome b-c1 complex, complex III, CIII) and cytochrome c oxidase (complex IV, CIV), that cooperate to transfer electrons derived from NADH and succinate to molecular oxygen, creating an electrochemical gradient over the inner membrane that drives transmembrane transport and the ATP synthase. Cytochrome c oxidase is the component of the respiratory chain that catalyzes the reduction of oxygen to water. Electrons originating from reduced cytochrome c in the intermembrane space (IMS) are transferred via the dinuclear copper A center (CU(A)) of subunit 2 and heme A of subunit 1 to the active site in subunit 1, a binuclear center (BNC) formed by heme A3 and copper B (CU(B)). The BNC reduces molecular oxygen to 2 water molecules using 4 electrons from cytochrome c in the IMS and 4 protons from the mitochondrial matrix. The protein is Cytochrome c oxidase subunit 2 (mt:CoII) of Drosophila yakuba (Fruit fly).